The chain runs to 363 residues: Heat-inducible transcription repressor HrcA (363 aa).

The protein belongs to the HrcA family.

Negative regulator of class I heat shock genes (grpE-dnaK-dnaJ and groELS operons). Prevents heat-shock induction of these operons. This chain is Heat-inducible transcription repressor HrcA, found in Afipia carboxidovorans (strain ATCC 49405 / DSM 1227 / KCTC 32145 / OM5) (Oligotropha carboxidovorans).